A 271-amino-acid chain; its full sequence is 3-methyl-2-oxobutanoate hydroxymethyltransferase (271 aa).

Mg(2+) is bound by residues aspartate 51 and aspartate 90. Residues 51-52 (DS), aspartate 90, and lysine 118 contribute to the 3-methyl-2-oxobutanoate site. Glutamate 120 contributes to the Mg(2+) binding site. Glutamate 186 serves as the catalytic Proton acceptor.

It belongs to the PanB family. In terms of assembly, homodecamer; pentamer of dimers. Mg(2+) is required as a cofactor.

It is found in the cytoplasm. The enzyme catalyses 3-methyl-2-oxobutanoate + (6R)-5,10-methylene-5,6,7,8-tetrahydrofolate + H2O = 2-dehydropantoate + (6S)-5,6,7,8-tetrahydrofolate. It participates in cofactor biosynthesis; (R)-pantothenate biosynthesis; (R)-pantoate from 3-methyl-2-oxobutanoate: step 1/2. In terms of biological role, catalyzes the reversible reaction in which hydroxymethyl group from 5,10-methylenetetrahydrofolate is transferred onto alpha-ketoisovalerate to form ketopantoate. The sequence is that of 3-methyl-2-oxobutanoate hydroxymethyltransferase from Xanthomonas campestris pv. campestris (strain B100).